Here is a 122-residue protein sequence, read N- to C-terminus: Large ribosomal subunit protein uL14 (122 aa).

This sequence belongs to the universal ribosomal protein uL14 family. In terms of assembly, part of the 50S ribosomal subunit. Forms a cluster with proteins L3 and L19. In the 70S ribosome, L14 and L19 interact and together make contacts with the 16S rRNA in bridges B5 and B8.

In terms of biological role, binds to 23S rRNA. Forms part of two intersubunit bridges in the 70S ribosome. This Streptococcus pneumoniae (strain JJA) protein is Large ribosomal subunit protein uL14.